Here is a 227-residue protein sequence, read N- to C-terminus: Homeobox-leucine zipper protein ATHB-54 (227 aa).

A DNA-binding region (homeobox) is located at residues 65 to 124 (EITKKRKLTPIQLRLLEESFEEEKRLEPDRKLWLAEKLGLQPSQVAVWFQNRRARYKTKQ). Residues 125–153 (LEHDCDSLKASYAKLKTDWDILFVQNQTL) form a leucine-zipper region. The disordered stretch occupies residues 175–198 (IERKRLGEEGSSVKSDNTQYSEEE).

Belongs to the HD-ZIP homeobox family. Class I subfamily. Predominantly expressed in flowers and siliques.

The protein localises to the nucleus. Its function is as follows. Probable transcription factor. The protein is Homeobox-leucine zipper protein ATHB-54 (ATHB-54) of Arabidopsis thaliana (Mouse-ear cress).